A 470-amino-acid polypeptide reads, in one-letter code: Putative multidrug resistance protein MdtD (470 aa).

The Periplasmic portion of the chain corresponds to 1-11 (MTEFPDNTRWQ). The helical transmembrane segment at 12–32 (LWIVAFGFFMQSLDTTIVNTA) threads the bilayer. The Cytoplasmic portion of the chain corresponds to 33–48 (LPSMAKSLGESPLHMH). Residues 49–69 (MVVVSYVLTVAVMLPASGWLA) traverse the membrane as a helical segment. At 70–76 (DKIGVRN) the chain is on the periplasmic side. Residues 77–97 (IFFAAIVLFTLGSLFCALSGT) form a helical membrane-spanning segment. The Cytoplasmic portion of the chain corresponds to 98–101 (LNQL). A helical membrane pass occupies residues 102–124 (VLARVLQGVGGAMMVPVGRLTVM). Topologically, residues 125–137 (KIVPRAQYMAAMT) are periplasmic. Residues 138-158 (FVALPGQIGPLLGPALGGVLV) form a helical membrane-spanning segment. Topologically, residues 159-164 (EYASWH) are cytoplasmic. The chain crosses the membrane as a helical span at residues 165–185 (WIFLINIPVGIVGAMATFMLM). At 186–196 (PNYTIETRRFD) the chain is on the periplasmic side. Residues 197–217 (LPGFLLLAIGMAVLTLALDGS) form a helical membrane-spanning segment. Residues 218 to 224 (KSMGISP) are Cytoplasmic-facing. A helical membrane pass occupies residues 225 to 245 (WTLAGLAAGGAAAILLYLFHA). At 246 to 262 (KKNSGALFSLRLFRTPT) the chain is on the periplasmic side. The chain crosses the membrane as a helical span at residues 263 to 283 (FSLGLLGSFAGRIGSGMLPFM). The Cytoplasmic portion of the chain corresponds to 284 to 285 (TP). A helical membrane pass occupies residues 286 to 306 (VFLQIGLGFSPFHAGLMMIPM). At 307–341 (VLGSMGMKRIVVQIVNRFGYRRVLVATTLGLALVS) the chain is on the periplasmic side. Residues 342-362 (LLFMSVALLGWYYLLPLVLLL) traverse the membrane as a helical segment. At 363–395 (QGMVNSARFSSMNTLTLKDLPDTLASSGNSLLS) the chain is on the cytoplasmic side. Residues 396–416 (MIMQLSMSIGVTIAGMLLGMF) form a helical membrane-spanning segment. The Periplasmic portion of the chain corresponds to 417–430 (GQQHIGIDSSATHH). A helical membrane pass occupies residues 431 to 451 (VFMYTWLCMAVIIALPAIIFA). At 452 to 470 (RVPNDTQQNMVISRRKRSL) the chain is on the cytoplasmic side.

This sequence belongs to the major facilitator superfamily. TCR/Tet family.

It is found in the cell inner membrane. The polypeptide is Putative multidrug resistance protein MdtD (Salmonella typhi).